We begin with the raw amino-acid sequence, 177 residues long: Large ribosomal subunit protein uL6 (177 aa).

It belongs to the universal ribosomal protein uL6 family. As to quaternary structure, part of the 50S ribosomal subunit.

In terms of biological role, this protein binds to the 23S rRNA, and is important in its secondary structure. It is located near the subunit interface in the base of the L7/L12 stalk, and near the tRNA binding site of the peptidyltransferase center. In Serratia proteamaculans (strain 568), this protein is Large ribosomal subunit protein uL6.